The primary structure comprises 386 residues: Probable dual-specificity RNA methyltransferase RlmN (386 aa).

Catalysis depends on E123, which acts as the Proton acceptor. A Radical SAM core domain is found at 129–372 (YPTRTTLCIS…ATLRDTRGQD (244 aa)). A disulfide bridge connects residues C136 and C377. 3 residues coordinate [4Fe-4S] cluster: C143, C147, and C150. Residues 198–199 (GE), S232, 255–257 (SLH), and N334 each bind S-adenosyl-L-methionine. C377 acts as the S-methylcysteine intermediate in catalysis.

This sequence belongs to the radical SAM superfamily. RlmN family. Requires [4Fe-4S] cluster as cofactor.

The protein resides in the cytoplasm. The enzyme catalyses adenosine(2503) in 23S rRNA + 2 reduced [2Fe-2S]-[ferredoxin] + 2 S-adenosyl-L-methionine = 2-methyladenosine(2503) in 23S rRNA + 5'-deoxyadenosine + L-methionine + 2 oxidized [2Fe-2S]-[ferredoxin] + S-adenosyl-L-homocysteine. It catalyses the reaction adenosine(37) in tRNA + 2 reduced [2Fe-2S]-[ferredoxin] + 2 S-adenosyl-L-methionine = 2-methyladenosine(37) in tRNA + 5'-deoxyadenosine + L-methionine + 2 oxidized [2Fe-2S]-[ferredoxin] + S-adenosyl-L-homocysteine. In terms of biological role, specifically methylates position 2 of adenine 2503 in 23S rRNA and position 2 of adenine 37 in tRNAs. In Bifidobacterium adolescentis (strain ATCC 15703 / DSM 20083 / NCTC 11814 / E194a), this protein is Probable dual-specificity RNA methyltransferase RlmN.